Here is a 199-residue protein sequence, read N- to C-terminus: Large ribosomal subunit protein uL5 (199 aa).

It belongs to the universal ribosomal protein uL5 family. Part of the 50S ribosomal subunit; part of the 5S rRNA/L5/L18/L25 subcomplex. Contacts the 5S rRNA and the P site tRNA. Forms a bridge to the 30S subunit in the 70S ribosome.

Functionally, this is one of the proteins that bind and probably mediate the attachment of the 5S RNA into the large ribosomal subunit, where it forms part of the central protuberance. In the 70S ribosome it contacts protein S13 of the 30S subunit (bridge B1b), connecting the 2 subunits; this bridge is implicated in subunit movement. Contacts the P site tRNA; the 5S rRNA and some of its associated proteins might help stabilize positioning of ribosome-bound tRNAs. In Frankia casuarinae (strain DSM 45818 / CECT 9043 / HFP020203 / CcI3), this protein is Large ribosomal subunit protein uL5.